We begin with the raw amino-acid sequence, 283 residues long: Pantothenate synthetase 2 (283 aa).

34–41 (MGALHDGH) is a binding site for ATP. The active-site Proton donor is the His-41. Residue Gln-65 coordinates (R)-pantoate. Gln-65 is a beta-alanine binding site. 152–155 (GEKD) serves as a coordination point for ATP. Gln-158 is a (R)-pantoate binding site. ATP is bound by residues Val-181 and 189 to 192 (MSSR).

This sequence belongs to the pantothenate synthetase family. Homodimer.

The protein localises to the cytoplasm. It carries out the reaction (R)-pantoate + beta-alanine + ATP = (R)-pantothenate + AMP + diphosphate + H(+). The protein operates within cofactor biosynthesis; (R)-pantothenate biosynthesis; (R)-pantothenate from (R)-pantoate and beta-alanine: step 1/1. Catalyzes the condensation of pantoate with beta-alanine in an ATP-dependent reaction via a pantoyl-adenylate intermediate. The chain is Pantothenate synthetase 2 from Bradyrhizobium diazoefficiens (strain JCM 10833 / BCRC 13528 / IAM 13628 / NBRC 14792 / USDA 110).